The chain runs to 294 residues: 4-hydroxy-tetrahydrodipicolinate synthase (294 aa).

Thr44 contacts pyruvate. The active-site Proton donor/acceptor is the Tyr132. The active-site Schiff-base intermediate with substrate is Lys161. A pyruvate-binding site is contributed by Ile203.

This sequence belongs to the DapA family. In terms of assembly, homotetramer; dimer of dimers.

The protein resides in the cytoplasm. It catalyses the reaction L-aspartate 4-semialdehyde + pyruvate = (2S,4S)-4-hydroxy-2,3,4,5-tetrahydrodipicolinate + H2O + H(+). Its pathway is amino-acid biosynthesis; L-lysine biosynthesis via DAP pathway; (S)-tetrahydrodipicolinate from L-aspartate: step 3/4. In terms of biological role, catalyzes the condensation of (S)-aspartate-beta-semialdehyde [(S)-ASA] and pyruvate to 4-hydroxy-tetrahydrodipicolinate (HTPA). In Aquifex aeolicus (strain VF5), this protein is 4-hydroxy-tetrahydrodipicolinate synthase.